The chain runs to 513 residues: MQLNSTEISDLIKQRIESFDVVSEARNEGTIVSVSDGIIRIHGLADVMQGEMIELPGGRYALALNLERDSVGAVVMGPYANLKEGMKVTGTGRILEVPVGPELLGRVVNTLGEPIDGKGPIEAKLTSPVEVIAPGVIARKSVDQPVQTGYKSVDSMIPIGRGQRELVIGDRQTGKTAMAIDAIINQKDSGIFSIYVAIGQKASTIANVVRKLEEHGALANTIVVVASASESAALQYLAPYAGCAMGEYFRDRGEDALIVYDDLSKQAVAYRQISLLLKRPPGREAFPGDVFYLHSRLLERAARVNEEYVERFTNGEVKGKTGSLTALPIIETQAGDVSAFVPTNVISITDGQIFLQTELFNAGVRPAVDPGISVSRVGGSAQTKIIKKLSGGIRTALAQYRELAAFAQFSSDLDEATKKQLDHGQKVTELMKQKQYAPMSVFDQALVIFAAERGYLADVELNKLLDFEAALLSYARGQYAEFAAEIDKTGAYNDEVEAQLKKLTDDFVATQTW.

An ATP-binding site is contributed by 169–176 (GDRQTGKT).

It belongs to the ATPase alpha/beta chains family. F-type ATPases have 2 components, CF(1) - the catalytic core - and CF(0) - the membrane proton channel. CF(1) has five subunits: alpha(3), beta(3), gamma(1), delta(1), epsilon(1). CF(0) has three main subunits: a(1), b(2) and c(9-12). The alpha and beta chains form an alternating ring which encloses part of the gamma chain. CF(1) is attached to CF(0) by a central stalk formed by the gamma and epsilon chains, while a peripheral stalk is formed by the delta and b chains.

It localises to the cell inner membrane. The catalysed reaction is ATP + H2O + 4 H(+)(in) = ADP + phosphate + 5 H(+)(out). Functionally, produces ATP from ADP in the presence of a proton gradient across the membrane. The alpha chain is a regulatory subunit. This is ATP synthase subunit alpha 1 from Vibrio campbellii (strain ATCC BAA-1116).